The sequence spans 610 residues: UvrABC system protein C (610 aa).

Residues 16-94 (SQPGVYRMYD…IKLYQPRYNV (79 aa)) form the GIY-YIG domain. The region spanning 204–239 (DQVLTQLISRMETASQNLEFEEAARIRDQIQAVRRV) is the UVR domain.

Belongs to the UvrC family. In terms of assembly, interacts with UvrB in an incision complex.

The protein localises to the cytoplasm. The UvrABC repair system catalyzes the recognition and processing of DNA lesions. UvrC both incises the 5' and 3' sides of the lesion. The N-terminal half is responsible for the 3' incision and the C-terminal half is responsible for the 5' incision. This chain is UvrABC system protein C, found in Escherichia coli O1:K1 / APEC.